The following is a 398-amino-acid chain: DNA-directed RNA polymerase III subunit RPC4 (398 aa).

Residues 1 to 114 (MSEGNAAGEP…SHSIFEQGPA (114 aa)) are disordered. Position 2 is an N-acetylserine (Ser2). Ser42 is subject to Phosphoserine. Positions 66–100 (KIKEEPKEEVTVKKEKRERDRDRQREGHGRGRGRP) are enriched in basic and acidic residues. Glycyl lysine isopeptide (Lys-Gly) (interchain with G-Cter in SUMO2) cross-links involve residues Lys68 and Lys78. Residues Arg95, Arg97, and Arg99 each carry the omega-N-methylarginine modification. Glycyl lysine isopeptide (Lys-Gly) (interchain with G-Cter in SUMO2) cross-links involve residues Lys141, Lys152, Lys160, Lys190, Lys199, Lys206, Lys220, Lys285, Lys302, Lys310, and Lys396. Residues 220–244 (KEEPRDEEEEAKMKAPPKAARKTPG) form a disordered region.

Belongs to the eukaryotic RPC4/POLR3D RNA polymerase subunit family. In terms of assembly, component of the RNA polymerase III complex consisting of 17 subunits: a ten-subunit horseshoe-shaped catalytic core composed of POLR3A/RPC1, POLR3B/RPC2, POLR1C/RPAC1, POLR1D/RPAC2, POLR3K/RPC10, POLR2E/RPABC1, POLR2F/RPABC2, POLR2H/RPABC3, POLR2K/RPABC4 and POLR2L/RPABC5; a mobile stalk composed of two subunits POLR3H/RPC8 and CRCP/RPC9, protruding from the core and functioning primarily in transcription initiation; and additional subunits homologous to general transcription factors of the RNA polymerase II machinery, POLR3C/RPC3-POLR3F/RPC6-POLR3G/RPC7 heterotrimer required for transcription initiation and POLR3D/RPC4-POLR3E/RPC5 heterodimer involved in both transcription initiation and termination. Sumoylation on Lys-141 can serve as a signal to mark misfolded Pol III for proteasomal degradation.

The protein localises to the nucleus. Its function is as follows. DNA-dependent RNA polymerase catalyzes the transcription of DNA into RNA using the four ribonucleoside triphosphates as substrates. Specific peripheric component of RNA polymerase III (Pol III) which synthesizes small non-coding RNAs including 5S rRNA, snRNAs, tRNAs and miRNAs from at least 500 distinct genomic loci. Assembles with POLR3E/RPC5 forming a subcomplex that binds the Pol III core. Enables recruitment of Pol III at transcription initiation site and drives transcription initiation from both type 2 and type 3 DNA promoters. Required for efficient transcription termination and reinitiation. Pol III plays a key role in sensing and limiting infection by intracellular bacteria and DNA viruses. Acts as nuclear and cytosolic DNA sensor involved in innate immune response. Can sense non-self dsDNA that serves as template for transcription into dsRNA. The non-self RNA polymerase III transcripts, such as Epstein-Barr virus-encoded RNAs (EBERs) induce type I interferon and NF-kappa-B through the RIG-I pathway. The chain is DNA-directed RNA polymerase III subunit RPC4 from Homo sapiens (Human).